The chain runs to 697 residues: Phosphate acetyltransferase (697 aa).

The interval 366–697 (MFEHKLLEQA…QSPTEKASAQ (332 aa)) is phosphate acetyltransferase.

The protein in the N-terminal section; belongs to the CobB/CobQ family. This sequence in the C-terminal section; belongs to the phosphate acetyltransferase and butyryltransferase family. Homohexamer.

It is found in the cytoplasm. The enzyme catalyses acetyl-CoA + phosphate = acetyl phosphate + CoA. It functions in the pathway metabolic intermediate biosynthesis; acetyl-CoA biosynthesis; acetyl-CoA from acetate: step 2/2. Involved in acetate metabolism. The chain is Phosphate acetyltransferase (pta) from Streptomyces coelicolor (strain ATCC BAA-471 / A3(2) / M145).